The chain runs to 108 residues: T cell receptor alpha variable 1-1 (108 aa).

Positions Met1–Gly18 are cleaved as a signal peptide. The region spanning Gln19–Arg108 is the Ig-like domain. The N-linked (GlcNAc...) asparagine glycan is linked to Asn38. Cys39 and Cys105 are oxidised to a cystine.

Alpha-beta TR is a heterodimer composed of an alpha and beta chain; disulfide-linked. The alpha-beta TR is associated with the transmembrane signaling CD3 coreceptor proteins to form the TR-CD3 (TcR or TCR). The assembly of alpha-beta TR heterodimers with CD3 occurs in the endoplasmic reticulum where a single alpha-beta TR heterodimer associates with one CD3D-CD3E heterodimer, one CD3G-CD3E heterodimer and one CD247 homodimer forming a stable octameric structure. CD3D-CD3E and CD3G-CD3E heterodimers preferentially associate with TR alpha and TR beta chains, respectively. The association of the CD247 homodimer is the last step of TcR assembly in the endoplasmic reticulum and is required for transport to the cell surface.

It localises to the cell membrane. Its function is as follows. V region of the variable domain of T cell receptor (TR) alpha chain that participates in the antigen recognition. Alpha-beta T cell receptors are antigen specific receptors which are essential to the immune response and are present on the cell surface of T lymphocytes. Recognize peptide-major histocompatibility (MH) (pMH) complexes that are displayed by antigen presenting cells (APC), a prerequisite for efficient T cell adaptive immunity against pathogens. Binding of alpha-beta TR to pMH complex initiates TR-CD3 clustering on the cell surface and intracellular activation of LCK that phosphorylates the ITAM motifs of CD3G, CD3D, CD3E and CD247 enabling the recruitment of ZAP70. In turn ZAP70 phosphorylates LAT, which recruits numerous signaling molecules to form the LAT signalosome. The LAT signalosome propagates signal branching to three major signaling pathways, the calcium, the mitogen-activated protein kinase (MAPK) kinase and the nuclear factor NF-kappa-B (NF-kB) pathways, leading to the mobilization of transcription factors that are critical for gene expression and essential for T cell growth and differentiation. The T cell repertoire is generated in the thymus, by V-(D)-J rearrangement. This repertoire is then shaped by intrathymic selection events to generate a peripheral T cell pool of self-MH restricted, non-autoaggressive T cells. Post-thymic interaction of alpha-beta TR with the pMH complexes shapes TR structural and functional avidity. The chain is T cell receptor alpha variable 1-1 from Homo sapiens (Human).